Consider the following 211-residue polypeptide: Glutathione S-transferase class-mu 28 kDa isozyme (211 aa).

Residue alanine 2 is modified to N-acetylalanine. One can recognise a GST N-terminal domain in the interval 4 to 86 (EHIKVIYFDG…YMAKKHHMMG (83 aa)). Glutathione contacts are provided by residues tyrosine 10, 10–11 (YF), arginine 16, 41–45 (WPKIK), leucine 53, 55–56 (AV), and 70–71 (ES). One can recognise a GST C-terminal domain in the interval 88–211 (TDEEYYSVEK…YLSNRPATPF (124 aa)).

It belongs to the GST superfamily. Mu family. As to quaternary structure, homodimer. As to expression, in the adult, expressed in excretory epithelial cells but absent from the caecal epithelium and flame cells. Also expressed in the tegument and its extensions into the parenchyma. In the schistosomulum, expressed in the tegument and associated structures. Not expressed in digestive tract, reproductive organs or muscles (at protein level).

The catalysed reaction is RX + glutathione = an S-substituted glutathione + a halide anion + H(+). Conjugation of reduced glutathione to a wide number of exogenous and endogenous hydrophobic electrophiles. Functionally, GST isoenzymes appear to play a central role in the parasite detoxification system. Other functions are also suspected including a role in increasing the solubility of haematin in the parasite gut. This chain is Glutathione S-transferase class-mu 28 kDa isozyme (GST28), found in Schistosoma mansoni (Blood fluke).